The primary structure comprises 381 residues: Hps1-dma1 cluster transcription factor tfc7 (381 aa).

The segment at residues 10–37 is a DNA-binding region (zn(2)-C6 fungal-type); that stretch reads CDHCSATKIKCTQERPQCTRCRALGRDC. Positions 41–88 are disordered; that stretch reads RSLRAGKPPRSSQGLNRKISNAPVLPRQNTPVSNPTSMSSKPEHWPTM. Polar residues-rich tracts occupy residues 50-59 and 67-80; these read RSSQGLNRKI and RQNTPVSNPTSMSS.

It is found in the nucleus. Functionally, transcription factor that regulates the expression of the hps1-dma1 gene cluster that probably mediates the biosynthesis a derivative of cyclopiazonic acid (CPA). Further studies are required to whether the CPA-like hps1-dma1 cluster is functional or a non-functional relic reflecting evolution of D.septosporum. This chain is Hps1-dma1 cluster transcription factor tfc7 (tfc7), found in Dothistroma septosporum (strain NZE10 / CBS 128990) (Red band needle blight fungus).